Consider the following 400-residue polypeptide: Formate-dependent phosphoribosylglycinamide formyltransferase (400 aa).

N(1)-(5-phospho-beta-D-ribosyl)glycinamide-binding positions include 22 to 23 (EL) and glutamate 82. Residues arginine 115, lysine 156, 161–166 (SSGKGQ), 196–199 (EGFI), and glutamate 204 each bind ATP. The ATP-grasp domain maps to 120-309 (RLAAETLGLP…EFALHARAIL (190 aa)). Mg(2+) is bound by residues glutamate 268 and glutamate 280. N(1)-(5-phospho-beta-D-ribosyl)glycinamide contacts are provided by residues aspartate 287, lysine 361, and 368-369 (RR).

It belongs to the PurK/PurT family. In terms of assembly, homodimer.

The catalysed reaction is N(1)-(5-phospho-beta-D-ribosyl)glycinamide + formate + ATP = N(2)-formyl-N(1)-(5-phospho-beta-D-ribosyl)glycinamide + ADP + phosphate + H(+). Its pathway is purine metabolism; IMP biosynthesis via de novo pathway; N(2)-formyl-N(1)-(5-phospho-D-ribosyl)glycinamide from N(1)-(5-phospho-D-ribosyl)glycinamide (formate route): step 1/1. Its function is as follows. Involved in the de novo purine biosynthesis. Catalyzes the transfer of formate to 5-phospho-ribosyl-glycinamide (GAR), producing 5-phospho-ribosyl-N-formylglycinamide (FGAR). Formate is provided by PurU via hydrolysis of 10-formyl-tetrahydrofolate. This chain is Formate-dependent phosphoribosylglycinamide formyltransferase, found in Xanthomonas oryzae pv. oryzae (strain PXO99A).